Here is a 313-residue protein sequence, read N- to C-terminus: Short-chain dehydrogenase/reductase family 9C member 7 (313 aa).

29 to 53 (FITGCDSGFGNLLAKQLVDRGMQVL) contributes to the NADP(+) binding site. Ser-160 is a binding site for substrate. Residue Tyr-172 is the Proton acceptor of the active site. Ser-185 carries the post-translational modification Phosphoserine.

Belongs to the short-chain dehydrogenases/reductases (SDR) family. Expressed in the skin. Expressed in granular and cornified layers of the epidermis (at protein level). Highly expressed in liver.

Its subcellular location is the cytoplasm. It catalyses the reaction a N-[omega-(9R,10R)-epoxy-(13R)-hydroxy-(11E)-octadecenoyloxy]acyl-beta-D-glucosyl-(1&lt;-&gt;1)-sphing-4E-enine + NAD(+) = a N-[omega-(9R,10R)-epoxy-13-oxo-(11E)-octadecenoyloxy]acyl-beta-D-glucosyl-(1&lt;-&gt;1)-sphing-4E-enine + NADH + H(+). The catalysed reaction is a N-[omega-(9R,10R)-epoxy-(13R)-hydroxy-(11E)-octadecenoyloxy]-acylsphing-4E-enine + NAD(+) = a N-[omega-(9R,10R)-epoxy-13-oxo-(11E)-octadecenoyloxy]-acylsphing-4E-enine + NADH + H(+). In terms of biological role, plays a crucial role in the formation of the epidermal permeability barrier. Catalyzes the NAD+-dependent dehydrogenation of the linoleate 9,10-trans-epoxy-11E-13-alcohol esterified in omega-O-acylceramides (such as in N-[omega-(9R,10R)-epoxy-(13R)-hydroxy-(11E)-octadecenoyloxy]-acylsphing-4E-enine) to the corresponding 13-ketone, the reactive moiety required for binding of epidermal ceramides to proteins. Displays weak conversion of all-trans-retinal to all-trans-retinol in the presence of NADH. Has apparently no steroid dehydrogenase activity. This chain is Short-chain dehydrogenase/reductase family 9C member 7 (SDR9C7), found in Homo sapiens (Human).